The primary structure comprises 273 residues: Large ribosomal subunit protein uL2 (273 aa).

Residues 224-264 (AMNPVDHPHGGGEGRNFGKHPVTPWGIQTKGKKTRKNKRTD) are disordered. Over residues 253–264 (KGKKTRKNKRTD) the composition is skewed to basic residues.

It belongs to the universal ribosomal protein uL2 family. In terms of assembly, part of the 50S ribosomal subunit. Forms a bridge to the 30S subunit in the 70S ribosome.

One of the primary rRNA binding proteins. Required for association of the 30S and 50S subunits to form the 70S ribosome, for tRNA binding and peptide bond formation. It has been suggested to have peptidyltransferase activity; this is somewhat controversial. Makes several contacts with the 16S rRNA in the 70S ribosome. This Buchnera aphidicola subsp. Acyrthosiphon pisum (strain 5A) protein is Large ribosomal subunit protein uL2.